The chain runs to 245 residues: UPF0246 protein cgR_1824 (245 aa).

It belongs to the UPF0246 family.

The sequence is that of UPF0246 protein cgR_1824 from Corynebacterium glutamicum (strain R).